A 456-amino-acid polypeptide reads, in one-letter code: Proline-specific permease ProY (456 aa).

Over Met1–Arg17 the chain is Cytoplasmic. Helical transmembrane passes span Phe18–Lys38 and Met39–Met59. Residues Arg60–Tyr95 are Cytoplasmic-facing. 2 consecutive transmembrane segments (helical) span residues Cys96–Val116 and Trp117–Ile137. Over Asn138 to Lys156 the chain is Cytoplasmic. A helical membrane pass occupies residues Val157–Asn177. Residues Gly178–Gly197 lie on the Periplasmic side of the membrane. The helical transmembrane segment at Trp198–Ile218 threads the bilayer. Over Gly219 to Arg242 the chain is Cytoplasmic. The chain crosses the membrane as a helical span at residues Ile243–Val263. Over Gly264–Met277 the chain is Periplasmic. Residues Gly278–Ile298 traverse the membrane as a helical segment. The Cytoplasmic portion of the chain corresponds to Asn299 to Pro331. The helical transmembrane segment at Trp332–Met352 threads the bilayer. The Periplasmic portion of the chain corresponds to Pro353–Asn355. Residues Val356–Leu376 traverse the membrane as a helical segment. At Leu377–Pro399 the chain is on the cytoplasmic side. The chain crosses the membrane as a helical span at residues Gly400–Gly420. At Tyr421–Asp424 the chain is on the periplasmic side. Residues Thr425–Phe445 traverse the membrane as a helical segment. Over Lys446 to Ala456 the chain is Cytoplasmic.

It belongs to the amino acid-polyamine-organocation (APC) superfamily. Amino acid transporter (AAT) (TC 2.A.3.1) family.

The protein localises to the cell inner membrane. In terms of biological role, permease that is involved in the transport across the cytoplasmic membrane of proline. This Salmonella typhimurium (strain LT2 / SGSC1412 / ATCC 700720) protein is Proline-specific permease ProY (proY).